The following is an 879-amino-acid chain: Valine--tRNA ligase (879 aa).

Positions 43–53 (PNVTGVLHMGH) match the 'HIGH' region motif. Positions 534–538 (KMSKS) match the 'KMSKS' region motif. Residue Lys-537 coordinates ATP. Residues 807 to 878 (LGNMIDVEAE…LKESIAALKK (72 aa)) adopt a coiled-coil conformation.

This sequence belongs to the class-I aminoacyl-tRNA synthetase family. ValS type 1 subfamily. As to quaternary structure, monomer.

The protein localises to the cytoplasm. It carries out the reaction tRNA(Val) + L-valine + ATP = L-valyl-tRNA(Val) + AMP + diphosphate. Catalyzes the attachment of valine to tRNA(Val). As ValRS can inadvertently accommodate and process structurally similar amino acids such as threonine, to avoid such errors, it has a 'posttransfer' editing activity that hydrolyzes mischarged Thr-tRNA(Val) in a tRNA-dependent manner. In Bacteroides thetaiotaomicron (strain ATCC 29148 / DSM 2079 / JCM 5827 / CCUG 10774 / NCTC 10582 / VPI-5482 / E50), this protein is Valine--tRNA ligase.